The following is a 348-amino-acid chain: [FeFe] hydrogenase maturase subunit HydE (348 aa).

Positions 49–268 (DEVHIRAIIE…LLPDSNIPAT (220 aa)) constitute a Radical SAM core domain. [4Fe-4S] cluster-binding residues include cysteine 63, cysteine 67, and cysteine 70. [2Fe-2S] cluster is bound by residues cysteine 311, cysteine 319, and cysteine 322.

It belongs to the radical SAM superfamily. HydE family. Monomer. Requires [4Fe-4S] cluster as cofactor. It depends on [2Fe-2S] cluster as a cofactor.

Required for the maturation of the [FeFe]-hydrogenase HydA. Catalyzes the reductive cleavage of S-adenosyl-L-methionine (in vitro), suggesting it may contribute to the biosynthesis of an essential sulfur-containing ligand that binds to the hydrogenase active site [2Fe-2S] cluster. This is [FeFe] hydrogenase maturase subunit HydE from Thermotoga maritima (strain ATCC 43589 / DSM 3109 / JCM 10099 / NBRC 100826 / MSB8).